A 352-amino-acid chain; its full sequence is MTEHKRRATPPYHQDPDVTALESLPARQQQVLQATVHHYVDTIEPVGSKTLVQRFGLKASAATVRSAMGALEQRGLLTQPHTSAGRVPSPQGYRHYVDCLLPPPGSAAQHLERELTNLSLRWAALDDLMWQLARRLTDFTGLMSLITRPARPKPTLQAVRLVRSGDRLLVMLVESSNQASHLNLRLPHEASNELEAIEEWTRDQLATTGNGSLDWSSLPPQLNLSGSLLREAIHSHSQAQTPAESDAVFHGMSRLLAQPEFSSSASLQPLLELMDTQPAAVVPVGSEQLGGVWIGAEHPKSALEACSVVQAPYHSSGEGIGQVALVGPMRMAYATAKAAVSSVANHLERLLC.

This sequence belongs to the HrcA family.

Its function is as follows. Negative regulator of class I heat shock genes (grpE-dnaK-dnaJ and groELS operons). Prevents heat-shock induction of these operons. The sequence is that of Heat-inducible transcription repressor HrcA from Prochlorococcus marinus (strain MIT 9313).